The chain runs to 548 residues: Acetylcholine receptor subunit alpha-type des-2 (548 aa).

The first 19 residues, 1-19 (MLIIIQSLLLATTASLCIA), serve as a signal peptide directing secretion. Residues 21-239 (TPVPTQIRLV…LTLYLRRKPL (219 aa)) lie on the Extracellular side of the membrane. Residues N52, N96, and N224 are each glycosylated (N-linked (GlcNAc...) asparagine). 3 helical membrane passes run 240-260 (FYLV…IVGF), 274-294 (VSLG…VSDQ), and 301-321 (FIPL…LGTV). A disordered region spans residues 422–460 (LIHLSPTAHQPDESISPSAPPVPSSSPLPPPLTPGPADD). The span at 439–455 (SAPPVPSSSPLPPPLTP) shows a compositional bias: pro residues. The chain crosses the membrane as a helical span at residues 517-537 (FVIFVVAFLIITFGINFIGFI). Over 538-548 (HWHQAGVEYGG) the chain is Cytoplasmic.

This sequence belongs to the ligand-gated ion channel (TC 1.A.9) family. Acetylcholine receptor (TC 1.A.9.1) subfamily. The functional receptor is a heteromer of deg-3 and des-2. Interacts with ric-3; which is required for proper receptor folding.

The protein resides in the cell membrane. In terms of biological role, subunit of the non-synaptic neuronal acetylcholine receptor (AChR), which may play a role in chemotaxis towards choline. After binding choline or acetylcholine, the AChR responds by an extensive change in conformation that affects all subunits and leads to opening of an ion-conducting channel across the plasma membrane. This Caenorhabditis elegans protein is Acetylcholine receptor subunit alpha-type des-2 (des-2).